Reading from the N-terminus, the 134-residue chain is Arsenate reductase 1 (134 aa).

Active-site nucleophile residues include Cys11, Cys83, and Cys90. Cystine bridges form between Cys11–Cys83 and Cys83–Cys90.

Belongs to the low molecular weight phosphotyrosine protein phosphatase family. Thioredoxin-coupled ArsC subfamily.

It is found in the cytoplasm. The catalysed reaction is arsenate + [thioredoxin]-dithiol + H(+) = arsenite + [thioredoxin]-disulfide + H2O. Its function is as follows. Catalyzes the reduction of arsenate [As(V)] to arsenite [As(III)]. This is Arsenate reductase 1 from Bacillus cereus (strain ATCC 10987 / NRS 248).